The sequence spans 241 residues: 3-oxoacyl-[acyl-carrier-protein] reductase FabG (241 aa).

NADP(+)-binding positions include 13–16 (GASG), Ser38, 57–58 (EI), and Asn83. A substrate-binding site is contributed by Ser135. Tyr148 serves as the catalytic Proton acceptor. NADP(+)-binding positions include 148 to 152 (YCASK) and Ile181.

Belongs to the short-chain dehydrogenases/reductases (SDR) family. As to quaternary structure, homotetramer.

It carries out the reaction a (3R)-hydroxyacyl-[ACP] + NADP(+) = a 3-oxoacyl-[ACP] + NADPH + H(+). It participates in lipid metabolism; fatty acid biosynthesis. Catalyzes the NADPH-dependent reduction of beta-ketoacyl-ACP substrates to beta-hydroxyacyl-ACP products, the first reductive step in the elongation cycle of fatty acid biosynthesis. In Rickettsia felis (strain ATCC VR-1525 / URRWXCal2) (Rickettsia azadi), this protein is 3-oxoacyl-[acyl-carrier-protein] reductase FabG (fabG).